Reading from the N-terminus, the 142-residue chain is Transmembrane protein 170A (142 aa).

Residues 1–48 (MEGGGGGLGGEPGLLQQILSLRLVPRVGNVTDCQRATLCSFPEMWYGV) are Lumenal-facing. A glycan (N-linked (GlcNAc...) asparagine) is linked at N29. The helical transmembrane segment at 49–69 (FLWALVSSLFFHIPAGLLALF) threads the bilayer. Residues 70 to 78 (TLRHHKYGR) lie on the Cytoplasmic side of the membrane. Residues 79–99 (FMSVGIFLMGVLGPISAGILT) form a helical membrane-spanning segment. Over 100–114 (SAAIAGVYKAAGKEM) the chain is Lumenal. A helical transmembrane segment spans residues 115 to 135 (IPFEALVLGVGQTFCVLIVSF). Residues 136–142 (LRILATL) are Cytoplasmic-facing.

This sequence belongs to the TMEM170 family.

Its subcellular location is the endoplasmic reticulum membrane. The protein resides in the nucleus envelope. Functionally, may regulate membrane morphogenesis in the endoplasmic reticulum (ER) by promoting ER sheet formation at the expense of ER tubules. The chain is Transmembrane protein 170A (tmem170a) from Xenopus laevis (African clawed frog).